The primary structure comprises 565 residues: Histone acetyltransferase ESA1 (565 aa).

Residues 1 to 33 (MAPRTQKSTSGTPGGSGTPGPDEGPQISPGGTY) are disordered. The 80-residue stretch at 38 to 117 (VVVGCKAFVQ…DEWVSGTRLI (80 aa)) folds into the Tudor-knot domain. Residues 173–217 (AQAAKNVQGESGLETPQKRKADSGDTSTAQSIRADSIDADADGED) form a disordered region. Residues 284–553 (ARVKNLNKIQ…INPQKLHWTA (270 aa)) enclose the MYST-type HAT domain. Residues 317–342 (LYICEMCLSYFPSPFTLKRHRSKCTL) form a C2HC MYST-type zinc finger. The ESA1-RPD3 motif signature appears at 367 to 388 (RTWCRNLCLLSKCFLDHKTLYY). Position 384 is an N6-acetyllysine; by autocatalysis (Lys-384). Residues 425–429 (ACILT) and 434–440 (QRAGYGK) contribute to the acetyl-CoA site. The active-site Proton donor/acceptor is the Glu-460. Ser-464 provides a ligand contact to acetyl-CoA.

The protein belongs to the MYST (SAS/MOZ) family. In terms of assembly, component of the NuA4 histone acetyltransferase complex. Post-translationally, autoacetylation at Lys-384 is required for proper function.

Its subcellular location is the nucleus. It localises to the chromosome. It carries out the reaction L-lysyl-[histone] + acetyl-CoA = N(6)-acetyl-L-lysyl-[histone] + CoA + H(+). The enzyme catalyses L-lysyl-[protein] + acetyl-CoA = N(6)-acetyl-L-lysyl-[protein] + CoA + H(+). The catalysed reaction is 2-hydroxyisobutanoyl-CoA + L-lysyl-[protein] = N(6)-(2-hydroxyisobutanoyl)-L-lysyl-[protein] + CoA + H(+). It catalyses the reaction (2E)-butenoyl-CoA + L-lysyl-[protein] = N(6)-(2E)-butenoyl-L-lysyl-[protein] + CoA + H(+). In terms of biological role, catalytic component of the NuA4 histone acetyltransferase (HAT) complex which is involved in epigenetic transcriptional activation of selected genes principally by acetylation of nucleosomal histones H4, H3, H2B, H2A and H2A variant H2A.Z. Acetylates histone H4 to form H4K5ac, H4K8ac, H4K12ac and H4K16ac, histone H3 to form H3K14ac, and histone H2A to form H2AK4ac and H2AK7ac. The NuA4 complex is involved in the DNA damage response and is required for chromosome segregation. The NuA4 complex plays a direct role in repair of DNA double-strand breaks (DSBs) through homologous recombination. Recruitment to promoters depends on H3K4me. Also acetylates non-histone proteins. In addition to protein acetyltransferase, can use different acyl-CoA substrates, such as 2-hydroxyisobutanoyl-CoA (2-hydroxyisobutyryl-CoA) or (2E)-butenoyl-CoA (crotonyl-CoA), and is able to mediate protein 2-hydroxyisobutyrylation and crotonylation, respectively. This is Histone acetyltransferase ESA1 (ESA1) from Mycosarcoma maydis (Corn smut fungus).